The primary structure comprises 215 residues: Nascent polypeptide-associated complex subunit alpha (215 aa).

The disordered stretch occupies residues 1-82 (MPGEATETVP…EKKARKAMSK (82 aa)). Residues 9–28 (VPVTEQEMQQPQAETGSGTE) are compositionally biased toward polar residues. Residues 29–42 (SDSDESVPDLEEGD) show a composition bias toward acidic residues. The span at 44-57 (AQTQTQQAQLAAAA) shows a compositional bias: low complexity. Positions 70 to 135 (SRSEKKARKA…AKIEDLSQQA (66 aa)) constitute an NAC-A/B domain. A Phosphoserine modification is found at Ser166. Residues 176–213 (VEVKDIELVMSQANVSRAKAVRALKNNNNDIVNAIMEL) enclose the UBA domain.

It belongs to the NAC-alpha family.

May promote appropriate targeting of ribosome-nascent polypeptide complexes. The polypeptide is Nascent polypeptide-associated complex subunit alpha (naca) (Danio rerio (Zebrafish)).